The primary structure comprises 483 residues: Betaine aldehyde dehydrogenase (483 aa).

K(+)-binding residues include Ile-27 and Asp-93. 149 to 151 (GAW) is an NAD(+) binding site. The Charge relay system role is filled by Lys-161. Residue 175–178 (KPSE) coordinates NAD(+). Val-179 contributes to the K(+) binding site. 228-231 (SVPT) lines the NAD(+) pocket. Residue Val-243 participates in K(+) binding. The active-site Proton acceptor is Glu-249. NAD(+)-binding residues include Gly-251, Cys-283, and Glu-380. The Nucleophile role is filled by Cys-283. Position 283 is a cysteine sulfenic acid (-SOH) (Cys-283). K(+) is bound by residues Lys-450 and Gly-453. Glu-457 (charge relay system) is an active-site residue.

It belongs to the aldehyde dehydrogenase family. In terms of assembly, dimer of dimers. The cofactor is K(+).

It catalyses the reaction betaine aldehyde + NAD(+) + H2O = glycine betaine + NADH + 2 H(+). It participates in amine and polyamine biosynthesis; betaine biosynthesis via choline pathway; betaine from betaine aldehyde: step 1/1. Involved in the biosynthesis of the osmoprotectant glycine betaine. Catalyzes the irreversible oxidation of betaine aldehyde to the corresponding acid. This is Betaine aldehyde dehydrogenase from Cereibacter sphaeroides (strain ATCC 17025 / ATH 2.4.3) (Rhodobacter sphaeroides).